A 315-amino-acid chain; its full sequence is Glycine--tRNA ligase alpha subunit (315 aa).

Belongs to the class-II aminoacyl-tRNA synthetase family. Tetramer of two alpha and two beta subunits.

It localises to the cytoplasm. It carries out the reaction tRNA(Gly) + glycine + ATP = glycyl-tRNA(Gly) + AMP + diphosphate. In Pseudomonas putida (strain GB-1), this protein is Glycine--tRNA ligase alpha subunit.